Reading from the N-terminus, the 183-residue chain is Ribosome rescue factor SmrB (183 aa).

The region spanning 98–173 (LDLHGLTQLQ…GDAALLVLIE (76 aa)) is the Smr domain.

Belongs to the SmrB family. In terms of assembly, associates with collided ribosomes, but not with correctly translating polysomes.

In terms of biological role, acts as a ribosome collision sensor. Detects stalled/collided disomes (pairs of ribosomes where the leading ribosome is stalled and a second ribosome has collided with it) and endonucleolytically cleaves mRNA at the 5' boundary of the stalled ribosome. Stalled/collided disomes form a new interface (primarily via the 30S subunits) that binds SmrB. Cleaved mRNA becomes available for tmRNA ligation, leading to ribosomal subunit dissociation and rescue of stalled ribosomes. This Salmonella paratyphi A (strain ATCC 9150 / SARB42) protein is Ribosome rescue factor SmrB.